Reading from the N-terminus, the 302-residue chain is tRNA dimethylallyltransferase (302 aa).

7–14 is a binding site for ATP; sequence GPTASGKS. 9–14 contributes to the substrate binding site; the sequence is TASGKS. Interaction with substrate tRNA regions lie at residues 32–35 and 156–160; these read DSMQ and QRILR.

This sequence belongs to the IPP transferase family. As to quaternary structure, monomer. Requires Mg(2+) as cofactor.

It catalyses the reaction adenosine(37) in tRNA + dimethylallyl diphosphate = N(6)-dimethylallyladenosine(37) in tRNA + diphosphate. In terms of biological role, catalyzes the transfer of a dimethylallyl group onto the adenine at position 37 in tRNAs that read codons beginning with uridine, leading to the formation of N6-(dimethylallyl)adenosine (i(6)A). The chain is tRNA dimethylallyltransferase from Beijerinckia indica subsp. indica (strain ATCC 9039 / DSM 1715 / NCIMB 8712).